The sequence spans 331 residues: UAP56-interacting factor (331 aa).

A UAP56-binding motif motif is present at residues 16 to 34 (APDKVDMSLDDIIRLNKKE). Disordered stretches follow at residues 30–51 (LNKKEQQARRPSPGNRRPLQKG), 63–99 (RARGQTQRGGGVPRGAITRAGVGRGRKIPPPVGRRRG), and 158–193 (GQRRPYRQTDIQRGLNSTRPFQQRRRPLPPVQTQRE). Over residues 166-175 (TDIQRGLNST) the composition is skewed to polar residues.

The protein belongs to the UIF family.

The protein resides in the nucleus. It localises to the nucleoplasm. It is found in the nucleus speckle. Required for mRNA export from the nucleus to the cytoplasm. Acts as an adapter that uses the ddx39b/uap56-nfx1 pathway to ensure efficient mRNA export and delivering to the nuclear pore. This chain is UAP56-interacting factor (fyttd1), found in Salmo salar (Atlantic salmon).